The sequence spans 597 residues: Aspartate--tRNA(Asp/Asn) ligase (597 aa).

Residue Glu-182 coordinates L-aspartate. Positions 206 to 209 (QLFK) are aspartate. Residue Arg-228 coordinates L-aspartate. ATP-binding positions include 228–230 (RDE) and Gln-237. Residue His-456 coordinates L-aspartate. Glu-490 contributes to the ATP binding site. Arg-497 is a binding site for L-aspartate. 542–545 (GFDR) contributes to the ATP binding site.

The protein belongs to the class-II aminoacyl-tRNA synthetase family. Type 1 subfamily. As to quaternary structure, homodimer.

It localises to the cytoplasm. It carries out the reaction tRNA(Asx) + L-aspartate + ATP = L-aspartyl-tRNA(Asx) + AMP + diphosphate. Its function is as follows. Aspartyl-tRNA synthetase with relaxed tRNA specificity since it is able to aspartylate not only its cognate tRNA(Asp) but also tRNA(Asn). Reaction proceeds in two steps: L-aspartate is first activated by ATP to form Asp-AMP and then transferred to the acceptor end of tRNA(Asp/Asn). The sequence is that of Aspartate--tRNA(Asp/Asn) ligase from Desulfatibacillum aliphaticivorans.